We begin with the raw amino-acid sequence, 266 residues long: Small ribosomal subunit protein eS1 (266 aa).

Positions 233–266 (GEGGGSSAAKPSGDDTGAKVDRADGYEPPIQETV) are disordered. Residues 244–257 (SGDDTGAKVDRADG) show a composition bias toward basic and acidic residues.

It belongs to the eukaryotic ribosomal protein eS1 family. As to quaternary structure, component of the small ribosomal subunit. Mature ribosomes consist of a small (40S) and a large (60S) subunit. The 40S subunit contains about 33 different proteins and 1 molecule of RNA (18S). The 60S subunit contains about 49 different proteins and 3 molecules of RNA (28S, 5.8S and 5S). Part of the small subunit (SSU) processome, composed of more than 70 proteins and the RNA chaperone small nucleolar RNA (snoRNA) U3.

The protein localises to the cytoplasm. Its subcellular location is the nucleus. The protein resides in the nucleolus. In terms of biological role, component of the small ribosomal subunit. The ribosome is a large ribonucleoprotein complex responsible for the synthesis of proteins in the cell. Part of the small subunit (SSU) processome, first precursor of the small eukaryotic ribosomal subunit. During the assembly of the SSU processome in the nucleolus, many ribosome biogenesis factors, an RNA chaperone and ribosomal proteins associate with the nascent pre-rRNA and work in concert to generate RNA folding, modifications, rearrangements and cleavage as well as targeted degradation of pre-ribosomal RNA by the RNA exosome. May play a role during erythropoiesis. The sequence is that of Small ribosomal subunit protein eS1 (rps3a) from Salmo salar (Atlantic salmon).